Consider the following 1673-residue polypeptide: Protein TIC 214 (1673 aa).

Transmembrane regions (helical) follow at residues 32-52 (AGLYYGFLTALALKTSYILLI), 70-90 (LILGQLGQLLSIYYAPLYIAF), 93-113 (PYTLTVLTLIYFLVNLFGNNL), 130-150 (LEILCIFLNNLILQLLNTCIF), 170-190 (MVFLISSFSAWLIGQILVLMC), and 218-238 (FFLVVNCLFGSSLFILTIQSL). Composition is skewed to basic and acidic residues over residues 264–276 (LKKSGVAKEGKST) and 283–298 (SHEKDSLKKEPYSKLE). 4 disordered regions span residues 264 to 302 (LKKSGVAKEGKSTEDEEDLSHEKDSLKKEPYSKLENEDE), 547 to 611 (VVFD…YSIR), 1120 to 1146 (NKQSLQKRNSSGNSNLDDSKNRNTDNL), and 1370 to 1433 (QQNQ…SEDD). The segment covering 562–586 (DNGNIQNNSSDKTINPQNNLTNLKP) has biased composition (polar residues). The segment covering 597-611 (TTEKEPKDDKSYSIR) has biased composition (basic and acidic residues). Residues 1120-1135 (NKQSLQKRNSSGNSNL) show a composition bias toward polar residues. The span at 1370-1379 (QQNQTTTKMN) shows a compositional bias: low complexity. 2 stretches are compositionally biased toward basic and acidic residues: residues 1380–1399 (TETKNKQKSKVENEKNKKTE) and 1406–1423 (TKNKQKSKTENEGNKETE).

Belongs to the TIC214 family. As to quaternary structure, part of the Tic complex.

The protein localises to the plastid. It is found in the chloroplast inner membrane. Involved in protein precursor import into chloroplasts. May be part of an intermediate translocation complex acting as a protein-conducting channel at the inner envelope. The polypeptide is Protein TIC 214 (Cuscuta gronovii (Common dodder)).